The primary structure comprises 201 residues: Probable nicotinate-nucleotide adenylyltransferase (201 aa).

The protein belongs to the NadD family.

The enzyme catalyses nicotinate beta-D-ribonucleotide + ATP + H(+) = deamido-NAD(+) + diphosphate. It functions in the pathway cofactor biosynthesis; NAD(+) biosynthesis; deamido-NAD(+) from nicotinate D-ribonucleotide: step 1/1. Its function is as follows. Catalyzes the reversible adenylation of nicotinate mononucleotide (NaMN) to nicotinic acid adenine dinucleotide (NaAD). The protein is Probable nicotinate-nucleotide adenylyltransferase of Clostridium botulinum (strain Langeland / NCTC 10281 / Type F).